The following is a 234-amino-acid chain: MESSVDEEALHQLYLWVDNIPLSRPKRNLSRDFSDGVLVAELIKFYFPKMVEMHNYVPANSLQQKLSNWGHLNRKVLNKLNFSVPDDVMRKIAQCSPGVVELVLIPLRQRLEERQRRQKLGVGSLQELAPQDSSGYMDMGLPQKVRGEGAPALGEQLREGRPLASRPPGYNQALQGDPSFVLQIAEKEQELLASQETVQVLQMKVKRLEHLLQLKNVRIDDLSRRLQQAERKQR.

Positions 7-112 (EEALHQLYLW…VLIPLRQRLE (106 aa)) constitute a Calponin-homology (CH) domain. The interval 181 to 234 (VLQIAEKEQELLASQETVQVLQMKVKRLEHLLQLKNVRIDDLSRRLQQAERKQR) is essential for homodimerization and microtubule bundling activity.

Homodimer. Interacts with actin, TJP1, CGN and CDH1. In terms of tissue distribution, expressed predominantly in the seminiferous epithelium of adult testis. Expressed in pillar cells of the organ of Corti (at protein level). Expressed in brain, kidney, lung and testis. Highly expressed in the trachea, lung and oviduct.

Its subcellular location is the cytoplasm. It localises to the cell projection. The protein localises to the cilium. The protein resides in the flagellum. It is found in the cytoskeleton. Its subcellular location is the cilium axoneme. It localises to the apical cell membrane. The protein localises to the basolateral cell membrane. The protein resides in the stress fiber. It is found in the microvillus. Its subcellular location is the lamellipodium. It localises to the filopodium. Functionally, microtubule-associated protein that promotes microtubule bundling and stabilizes microtubules against depolymerization in response to cold shock. Microtubule-associated protein involved in the stabilization of microtubules along the axis of migration during radial intercalation. Promotes the establishment and stabilization of an axis of microtubules required for the active migration of cells into the outer epithelium. Essential for ciliary central apparatus formation which requires both its microtubule-binding and bundling activities and for ciliary localization of HYDIN and SPAG6 in ependymal cilia. Binds actin in intestinal epithelial cells (IECs), essential for IECs survival and contributes to formation of filopodia and lamellipodia in migrating IECs. Regulates planar cell polarity signaling pathway and asymmetric microtubule accumulation in ciliated epithelia. The chain is Sperm flagellar protein 1 (Spef1) from Mus musculus (Mouse).